Reading from the N-terminus, the 36-residue chain is Pancreatic polypeptide (36 aa).

Tyr36 is subject to Tyrosine amide.

It belongs to the NPY family.

The protein resides in the secreted. Functionally, hormone secreted by pancreatic cells that acts as a regulator of pancreatic and gastrointestinal functions probably by signaling through the G protein-coupled receptor NPY4R2. The protein is Pancreatic polypeptide (PPY) of Chinchilla chinchilla (Short-tailed chinchilla).